Consider the following 135-residue polypeptide: U-myrmeciitoxin(01)-Mg7a (135 aa).

The signal sequence occupies residues 1 to 21; sequence MKLSCLSLALAIILLLAIVHS. A propeptide spanning residues 22–72 is cleaved from the precursor; it reads PNMEVKALAGPEADAIGFADAFGEADAFGEADAFGEADAFGEADAFGEADA. The segment at 69–95 is disordered; the sequence is EADAKRSKSSSKTKPKKPKKPKKKIKI. Residues 75-93 are compositionally biased toward basic residues; that stretch reads SKSSSKTKPKKPKKPKKKI. A glycan (O-linked (GalNAc...) serine) is linked at S120. O-linked (GalNAc...) threonine glycosylation is found at T129 and T130.

It belongs to the formicidae venom precursor-01 superfamily. In terms of processing, glycosylation is critical to maintaining the aqueous solubility of this protein, but does not directly contribute to its activity. As to expression, expressed by the venom gland.

It localises to the secreted. It is found in the target cell membrane. Functionally, neurotoxin that triggers pain behavior and inflammation in mammals, and is paralytic and lethal to insects. Causes a time-dependent increase in cell leak current. May act by targeting membranes. The sequence is that of U-myrmeciitoxin(01)-Mg7a from Myrmecia gulosa (Red bulldog ant).